A 362-amino-acid chain; its full sequence is Phosphoserine aminotransferase (362 aa).

2 residues coordinate L-glutamate: Ser-9 and Arg-42. Pyridoxal 5'-phosphate contacts are provided by residues 76–77 (GR), Trp-102, Thr-153, Asp-174, and Gln-197. Position 198 is an N6-(pyridoxal phosphate)lysine (Lys-198). Position 239–240 (239–240 (NT)) interacts with pyridoxal 5'-phosphate.

It belongs to the class-V pyridoxal-phosphate-dependent aminotransferase family. SerC subfamily. In terms of assembly, homodimer. The cofactor is pyridoxal 5'-phosphate.

The protein resides in the cytoplasm. It carries out the reaction O-phospho-L-serine + 2-oxoglutarate = 3-phosphooxypyruvate + L-glutamate. It catalyses the reaction 4-(phosphooxy)-L-threonine + 2-oxoglutarate = (R)-3-hydroxy-2-oxo-4-phosphooxybutanoate + L-glutamate. Its pathway is amino-acid biosynthesis; L-serine biosynthesis; L-serine from 3-phospho-D-glycerate: step 2/3. The protein operates within cofactor biosynthesis; pyridoxine 5'-phosphate biosynthesis; pyridoxine 5'-phosphate from D-erythrose 4-phosphate: step 3/5. Functionally, catalyzes the reversible conversion of 3-phosphohydroxypyruvate to phosphoserine and of 3-hydroxy-2-oxo-4-phosphonooxybutanoate to phosphohydroxythreonine. The polypeptide is Phosphoserine aminotransferase (Klebsiella pneumoniae (strain 342)).